A 212-amino-acid chain; its full sequence is UPF0502 protein ECA2523 (212 aa).

It belongs to the UPF0502 family.

In Pectobacterium atrosepticum (strain SCRI 1043 / ATCC BAA-672) (Erwinia carotovora subsp. atroseptica), this protein is UPF0502 protein ECA2523.